The chain runs to 229 residues: Large ribosomal subunit protein uL4 (229 aa).

The tract at residues S62–V103 is disordered. Positions K82–R97 are enriched in basic residues.

This sequence belongs to the universal ribosomal protein uL4 family. In terms of assembly, part of the 50S ribosomal subunit.

Its function is as follows. One of the primary rRNA binding proteins, this protein initially binds near the 5'-end of the 23S rRNA. It is important during the early stages of 50S assembly. It makes multiple contacts with different domains of the 23S rRNA in the assembled 50S subunit and ribosome. Forms part of the polypeptide exit tunnel. The sequence is that of Large ribosomal subunit protein uL4 from Mycoplasmopsis synoviae (strain 53) (Mycoplasma synoviae).